Reading from the N-terminus, the 90-residue chain is Caspase recruitment domain-containing protein 18 (90 aa).

The CARD domain occupies 1–90; that stretch reads MADQLLRKKR…PQLASKMGLH (90 aa).

Interacts with pro-CASP1. Interacts with CARD8. Primarily expressed in the heart and placenta.

Inhibits generation of IL-1-beta by interacting with caspase-1 and preventing its association with RIP2. Down-regulates the release of IL1B. The protein is Caspase recruitment domain-containing protein 18 (CARD18) of Homo sapiens (Human).